Consider the following 672-residue polypeptide: Beta-galactosidase GanA (672 aa).

A substrate-binding site is contributed by Arg105. Cys109 contacts Zn(2+). Asn143 serves as a coordination point for substrate. Glu144 (proton donor) is an active-site residue. Zn(2+) contacts are provided by Cys149, Cys151, and Cys154. Glu308 (nucleophile) is an active-site residue. Substrate contacts are provided by residues Trp316 and 356-359; that span reads EKLH.

The protein belongs to the glycosyl hydrolase 42 family. Homotrimer.

The enzyme catalyses Hydrolysis of terminal non-reducing beta-D-galactose residues in beta-D-galactosides.. With respect to regulation, inhibited by zinc, cobalt and copper ions. Functionally, involved in galactan degradation. Hydrolyzes galactooligosaccharides released by the endo-beta-1,4-galactanase GanB from galactan. Degrades galactotetraose, galactotriose and galactobiose, generating galactose as the end product. It is unable to use lactose. In vitro, shows maximal activity with o-nitrophenyl-beta-D-galactopyranoside (ONPG) and p-nitrophenyl-beta-D-galactopyranoside (PNPG) as substrates, trace activity with p-nitrophenyl-alpha-L-arabinopyranoside and o-nitrophenyl-beta-D-fucopyranoside as substrates, but no activity with p-nitrophenyl-alpha-D-galactopyranoside, p-nitrophenyl-beta-D-glucopyranoside, o-nitrophenyl-beta-D-xylopyranoside, p-nitrophenyl-beta-D-mannopyranoside or p-nitrophenyl-alpha-L-arabinofuranoside as substrates. The protein is Beta-galactosidase GanA of Bacillus subtilis (strain 168).